We begin with the raw amino-acid sequence, 113 residues long: MDQEAGFMVNFINSYFIALGVLIGGALIGGLGAYLAGEPPLTAITKLANRLKIWALVAAIGGTFDAVYSFERGILEGNTRDIFKQLLLIISAMGGAQSGWLIISWLTQEHLSS.

3 helical membrane passes run 16 to 36 (FIALGVLIGGALIGGLGAYLA), 51 to 71 (LKIWALVAAIGGTFDAVYSFE), and 86 to 106 (LLLIISAMGGAQSGWLIISWL).

It localises to the forespore outer membrane. Its function is as follows. Involved in sporulation. May contribute to cortex formation or stability. This is Sporulation membrane protein YtrH (ytrH) from Bacillus subtilis (strain 168).